A 98-amino-acid chain; its full sequence is DNA-binding protein Fis (98 aa).

A DNA-binding region (H-T-H motif) is located at residues 74–93 (QTRAAQMMGINRGTLRKKLK).

This sequence belongs to the transcriptional regulatory Fis family. In terms of assembly, homodimer.

Activates ribosomal RNA transcription. Plays a direct role in upstream activation of rRNA promoters. This chain is DNA-binding protein Fis, found in Proteus hauseri.